Consider the following 585-residue polypeptide: Frizzled-5 (585 aa).

An N-terminal signal peptide occupies residues 1–26; the sequence is MARPDPSAPPSLLLLLLAQLVGRAAA. The Extracellular portion of the chain corresponds to 27–238; that stretch reads ASKAPVCQEI…PDERTFATFW (212 aa). An FZ domain is found at 28–150; it reads SKAPVCQEIT…GDAEVLCMDY (123 aa). Intrachain disulfides connect C33/C94, C41/C87, C78/C116, C105/C147, and C109/C133. N47 is a glycosylation site (N-linked (GlcNAc...) asparagine). N-linked (GlcNAc...) asparagine glycosylation is present at N151. Positions 156–182 are disordered; sequence TTASPKSFPAKPTLPGPPGAPSSGGEC. The chain crosses the membrane as a helical span at residues 239–259; the sequence is IGLWSVLCFISTSTTVATFLI. Over 260–270 the chain is Cytoplasmic; sequence DMERFRYPERP. The helical transmembrane segment at 271-291 threads the bilayer; it reads IIFLSACYLCVSLGFLVRLVV. Residues 292–315 are Extracellular-facing; that stretch reads GHASVACSREHSHIHYETTGPALC. The chain crosses the membrane as a helical span at residues 316–336; the sequence is TVVFLLVYFFGMASSIWWVIL. The Cytoplasmic portion of the chain corresponds to 337-358; it reads SLTWFLAAGMKWGNEAIAGYAQ. A helical membrane pass occupies residues 359–379; the sequence is YFHLAAWLIPSVKSITALALS. The Extracellular segment spans residues 380-402; the sequence is SVDGDPVAGVCYVGNQNLNSLRG. A helical transmembrane segment spans residues 403 to 423; sequence FVLGPLVLYLLVGTLFLLAGF. Residues 424–449 lie on the Cytoplasmic side of the membrane; it reads VSLFRIRSVIKQGGTKTDKLEKLMIR. The helical transmembrane segment at 450-470 threads the bilayer; the sequence is IGIFTLLYTVPASIVVACYLY. At 471-500 the chain is on the extracellular side; it reads EQHYRESWEAALTCACPGSDAGQPRAKPEY. A helical transmembrane segment spans residues 501–521; that stretch reads WVLMLKYFMCLVVGITSGVWI. Over 522 to 585 the chain is Cytoplasmic; that stretch reads WSGKTLESWR…YHKQVSLSHV (64 aa). Positions 525 to 530 match the Lys-Thr-X-X-X-Trp motif, mediates interaction with the PDZ domain of Dvl family members motif; it reads KTLESW. Positions 583 to 585 match the PDZ-binding motif; the sequence is SHV.

This sequence belongs to the G-protein coupled receptor Fz/Smo family. Binding of unsaturated fatty acid molecules (via FZ domain) promotes homodimerization (via FZ domain). Interacts with WNT2B. Interacts with WNT7A. Interacts with GOPC. Ubiquitinated by RNF43 and ZNRF3, leading to its degradation by the proteasome.

It localises to the cell membrane. Its subcellular location is the golgi apparatus membrane. It is found in the synapse. The protein localises to the perikaryon. The protein resides in the cell projection. It localises to the dendrite. Its subcellular location is the axon. Functionally, receptor for Wnt proteins. Functions in the canonical Wnt/beta-catenin signaling pathway. In vitro activates WNT2, WNT10B, WNT5A, but not WNT2B or WNT4 signaling. In neurons, activation by WNT7A promotes formation of synapses. May be involved in transduction and intercellular transmission of polarity information during tissue morphogenesis and/or in differentiated tissues. Plays a role in yolk sac angiogenesis and in placental vascularization. Plays a role in ocular development. In Rattus norvegicus (Rat), this protein is Frizzled-5 (Fzd5).